A 125-amino-acid polypeptide reads, in one-letter code: Ribonuclease P protein component (125 aa).

This sequence belongs to the RnpA family. In terms of assembly, consists of a catalytic RNA component (M1 or rnpB) and a protein subunit.

It carries out the reaction Endonucleolytic cleavage of RNA, removing 5'-extranucleotides from tRNA precursor.. Functionally, RNaseP catalyzes the removal of the 5'-leader sequence from pre-tRNA to produce the mature 5'-terminus. It can also cleave other RNA substrates such as 4.5S RNA. The protein component plays an auxiliary but essential role in vivo by binding to the 5'-leader sequence and broadening the substrate specificity of the ribozyme. The sequence is that of Ribonuclease P protein component from Oleidesulfovibrio alaskensis (strain ATCC BAA-1058 / DSM 17464 / G20) (Desulfovibrio alaskensis).